Here is a 278-residue protein sequence, read N- to C-terminus: 4-deoxy-L-threo-5-hexosulose-uronate ketol-isomerase (278 aa).

Zn(2+)-binding residues include histidine 196, histidine 198, glutamate 203, and histidine 245.

It belongs to the KduI family. In terms of assembly, homohexamer. It depends on Zn(2+) as a cofactor.

The catalysed reaction is 5-dehydro-4-deoxy-D-glucuronate = 3-deoxy-D-glycero-2,5-hexodiulosonate. The protein operates within glycan metabolism; pectin degradation; 2-dehydro-3-deoxy-D-gluconate from pectin: step 4/5. In terms of biological role, catalyzes the isomerization of 5-dehydro-4-deoxy-D-glucuronate to 3-deoxy-D-glycero-2,5-hexodiulosonate. The sequence is that of 4-deoxy-L-threo-5-hexosulose-uronate ketol-isomerase from Escherichia coli O139:H28 (strain E24377A / ETEC).